Reading from the N-terminus, the 72-residue chain is Translation initiation factor IF-1 (72 aa).

The S1-like domain maps to Met1–Lys72.

It belongs to the IF-1 family. As to quaternary structure, component of the 30S ribosomal translation pre-initiation complex which assembles on the 30S ribosome in the order IF-2 and IF-3, IF-1 and N-formylmethionyl-tRNA(fMet); mRNA recruitment can occur at any time during PIC assembly.

It localises to the cytoplasm. One of the essential components for the initiation of protein synthesis. Stabilizes the binding of IF-2 and IF-3 on the 30S subunit to which N-formylmethionyl-tRNA(fMet) subsequently binds. Helps modulate mRNA selection, yielding the 30S pre-initiation complex (PIC). Upon addition of the 50S ribosomal subunit IF-1, IF-2 and IF-3 are released leaving the mature 70S translation initiation complex. This chain is Translation initiation factor IF-1, found in Carboxydothermus hydrogenoformans (strain ATCC BAA-161 / DSM 6008 / Z-2901).